Reading from the N-terminus, the 181-residue chain is CASP-like protein 5A1 (181 aa).

At 1-38 (MFASRPVVHPLEVAAPAHPVQQPAPGVLMKDLPGMPGT) the chain is on the cytoplasmic side. A helical transmembrane segment spans residues 39 to 59 (PGGLGLRVLQLLFAAISLAVM). Over 60–77 (SSTADFASVSAFCYLITT) the chain is Extracellular. The helical transmembrane segment at 78 to 98 (TVLQCVWSLTVAIVDIYALLV) threads the bilayer. Topologically, residues 99–115 (KRCLQNRRAVTLFSIGD) are cytoplasmic. The helical transmembrane segment at 116-136 (GITWLVSFSGACAAAGIPVLI) threads the bilayer. At 137-153 (DADLIMCSENPCASFQT) the chain is on the extracellular side. The helical transmembrane segment at 154 to 174 (AVAMGFMCCFSLLPSFLLNFY) threads the bilayer. At 175–181 (SIASSHG) the chain is on the cytoplasmic side.

Belongs to the Casparian strip membrane proteins (CASP) family. In terms of assembly, homodimer and heterodimers.

It localises to the cell membrane. The polypeptide is CASP-like protein 5A1 (Zea mays (Maize)).